Reading from the N-terminus, the 1164-residue chain is DNA-directed RNA polymerase 132 kDa polypeptide (1164 aa).

Belongs to the RNA polymerase beta chain family. As to quaternary structure, the DNA-dependent RNA polymerase used for intermediate and late genes expression consists of eight subunits (147) kDa, (133) kDa, (35) kDa, (30) kDa, (22) kDa, (19) kDa, (18) kDa and (7) kDa totalling more than 500 kDa in mass. The same holoenzyme, with the addition of the transcription-specificity factor RAP94, is used for early gene expression.

Its subcellular location is the virion. It catalyses the reaction RNA(n) + a ribonucleoside 5'-triphosphate = RNA(n+1) + diphosphate. Its function is as follows. Part of the DNA-dependent RNA polymerase which catalyzes the transcription of viral DNA into RNA using the four ribonucleoside triphosphates as substrates. Responsible for the transcription of early, intermediate and late genes. DNA-dependent RNA polymerase associates with the early transcription factor (ETF), itself composed of D6 and A7, thereby allowing the early genes transcription. Late transcription, and probably also intermediate transcription, require newly synthesized RNA polymerase. The polypeptide is DNA-directed RNA polymerase 132 kDa polypeptide (RPO132) (Mus musculus (Mouse)).